The primary structure comprises 217 residues: MNLAAIAKNYSMHNGESGAIVPYVPPPYNFASAPTFSQRTSQMESVSLGILNQAMSSTTGASGALKDEKAAFGAMAERLRDPEPIRQIKKQVGIRTLKNLKMELATMRRKKSALKITILISGCVTLATSMVGGLSIVDNEIFEDYKKNDWLMKAIHGLNLLCTTVLLAAGKISDKIQEEISRTKRDIAKRESYVSAASMSWNGDTEVLLQGIKYGDS.

This sequence belongs to the orbivirus NS3 family.

Functionally, may play a role in the release of virions from infected cells. This Camelus dromedarius (Dromedary) protein is Non-structural protein NS3 (Segment-10).